Reading from the N-terminus, the 214-residue chain is Adenylate kinase (214 aa).

ATP is bound at residue 10-15 (GVGKGT). The NMP stretch occupies residues 30–59 (STGDILRAAVKELTPMGAKAKGYMDSGALV). Residues Thr31, Arg36, 57–59 (ALV), 85–88 (GFPR), and Gln92 each bind AMP. The tract at residues 126–163 (GRRACANCGAGYHVDFAPSKVAGVCDACSGQLVQREDD) is LID. Arg127 contributes to the ATP binding site. 4 residues coordinate Zn(2+): Cys130, Cys133, Cys150, and Cys153. AMP contacts are provided by Arg160 and Arg171. Gly199 is an ATP binding site.

This sequence belongs to the adenylate kinase family. In terms of assembly, monomer.

The protein localises to the cytoplasm. The catalysed reaction is AMP + ATP = 2 ADP. Its pathway is purine metabolism; AMP biosynthesis via salvage pathway; AMP from ADP: step 1/1. In terms of biological role, catalyzes the reversible transfer of the terminal phosphate group between ATP and AMP. Plays an important role in cellular energy homeostasis and in adenine nucleotide metabolism. This is Adenylate kinase from Citrifermentans bemidjiense (strain ATCC BAA-1014 / DSM 16622 / JCM 12645 / Bem) (Geobacter bemidjiensis).